Consider the following 335-residue polypeptide: MLP-like protein 28 (335 aa).

The protein belongs to the MLP family.

Its function is as follows. Can bind steroids (in vitro), and may also bind other types of hydrophobic ligands. This is MLP-like protein 28 (MLP28) from Arabidopsis thaliana (Mouse-ear cress).